Reading from the N-terminus, the 297-residue chain is Carbamate kinase (297 aa).

It belongs to the carbamate kinase family.

The protein resides in the cytoplasm. It carries out the reaction hydrogencarbonate + NH4(+) + ATP = carbamoyl phosphate + ADP + H2O + H(+). It catalyses the reaction carbamate + ATP = carbamoyl phosphate + ADP. The enzyme catalyses hydrogencarbonate + NH4(+) = carbamate + H2O + H(+). Its pathway is nitrogen metabolism; (S)-allantoin degradation. Kinase involved in the anaerobic nitrogen utilization via the assimilation of allantoin. Catalyzes the transfer of a phosphate group from carbamoyl phosphate to ADP to produce ATP and leave carbamate, which spontaneously hydrolyzes to ammonia and hydrogencarbonate. The protein is Carbamate kinase of Escherichia coli O6:H1 (strain CFT073 / ATCC 700928 / UPEC).